Here is a 695-residue protein sequence, read N- to C-terminus: Elongation factor G (695 aa).

The tr-type G domain maps to 8-282 (KDTRNIGIMA…AIVDYMPAPI (275 aa)). Residues 17–24 (AHIDAGKT), 81–85 (DTPGH), and 135–138 (NKMD) contribute to the GTP site. Residues 285–304 (PDIKGVDPQTDEPTTRKSSD) form a disordered region.

Belongs to the TRAFAC class translation factor GTPase superfamily. Classic translation factor GTPase family. EF-G/EF-2 subfamily.

It is found in the cytoplasm. In terms of biological role, catalyzes the GTP-dependent ribosomal translocation step during translation elongation. During this step, the ribosome changes from the pre-translocational (PRE) to the post-translocational (POST) state as the newly formed A-site-bound peptidyl-tRNA and P-site-bound deacylated tRNA move to the P and E sites, respectively. Catalyzes the coordinated movement of the two tRNA molecules, the mRNA and conformational changes in the ribosome. This Finegoldia magna (strain ATCC 29328 / DSM 20472 / WAL 2508) (Peptostreptococcus magnus) protein is Elongation factor G.